We begin with the raw amino-acid sequence, 361 residues long: PTI1-like tyrosine-protein kinase 1 (361 aa).

The disordered stretch occupies residues 16-43 (EEQQLKSSQQQSDANHKNSKPAPVAKHE). Positions 68-350 (FGSKALIGEG…IVVKALQPLL (283 aa)) constitute a Protein kinase domain. ATP is bound by residues 74–82 (IGEGSYGRV) and Lys-96. Asp-200 (proton acceptor) is an active-site residue.

It belongs to the protein kinase superfamily. Tyr protein kinase family. As to quaternary structure, interacts with OXI1. Autophosphorylated and phosphorylated by OXI1.

It localises to the cell membrane. The enzyme catalyses L-tyrosyl-[protein] + ATP = O-phospho-L-tyrosyl-[protein] + ADP + H(+). The sequence is that of PTI1-like tyrosine-protein kinase 1 (PTI11) from Arabidopsis thaliana (Mouse-ear cress).